Reading from the N-terminus, the 361-residue chain is S-adenosylmethionine:tRNA ribosyltransferase-isomerase (361 aa).

Belongs to the QueA family. In terms of assembly, monomer.

It is found in the cytoplasm. It carries out the reaction 7-aminomethyl-7-carbaguanosine(34) in tRNA + S-adenosyl-L-methionine = epoxyqueuosine(34) in tRNA + adenine + L-methionine + 2 H(+). Its pathway is tRNA modification; tRNA-queuosine biosynthesis. In terms of biological role, transfers and isomerizes the ribose moiety from AdoMet to the 7-aminomethyl group of 7-deazaguanine (preQ1-tRNA) to give epoxyqueuosine (oQ-tRNA). In Actinobacillus pleuropneumoniae serotype 7 (strain AP76), this protein is S-adenosylmethionine:tRNA ribosyltransferase-isomerase.